We begin with the raw amino-acid sequence, 285 residues long: Shikimate dehydrogenase (NADP(+)) (285 aa).

Residues 20 to 22 (SIS) and Ser-67 each bind shikimate. Lys-71 acts as the Proton acceptor in catalysis. Glu-83 is an NADP(+) binding site. Shikimate contacts are provided by Asn-92 and Asp-107. NADP(+) is bound by residues 129 to 133 (GAGGA) and Met-227. Residue Tyr-229 participates in shikimate binding. Gly-250 serves as a coordination point for NADP(+).

Belongs to the shikimate dehydrogenase family. Homodimer.

The catalysed reaction is shikimate + NADP(+) = 3-dehydroshikimate + NADPH + H(+). It participates in metabolic intermediate biosynthesis; chorismate biosynthesis; chorismate from D-erythrose 4-phosphate and phosphoenolpyruvate: step 4/7. Its function is as follows. Involved in the biosynthesis of the chorismate, which leads to the biosynthesis of aromatic amino acids. Catalyzes the reversible NADPH linked reduction of 3-dehydroshikimate (DHSA) to yield shikimate (SA). This Streptococcus gordonii (strain Challis / ATCC 35105 / BCRC 15272 / CH1 / DL1 / V288) protein is Shikimate dehydrogenase (NADP(+)).